Reading from the N-terminus, the 766-residue chain is Single-minded homolog 1 (766 aa).

The bHLH domain maps to 1-53; that stretch reads MKEKSKNAARTRREKENSEFYELAKLLPLPSAITSQLDKASIIRLTTSYLKMR. PAS domains are found at residues 77–147 and 218–288; these read GREL…QPYH and PPSA…LVKG. Positions 292-335 constitute a PAC domain; it reads TKYYRFLAKHGGWVWVQSYATIVHNSRSSRPHCIVSVNYVLTDT. A Single-minded C-terminal domain is found at 336–766; the sequence is EYKGLQLSLD…GTSVIITNGS (431 aa). Positions 353 to 365 are enriched in polar residues; the sequence is AFSYTSSSTPTMT. Disordered stretches follow at residues 353–431, 528–563, and 642–662; these read AFSY…SQHD, WDEDSVVSSPDPGSASESGDRYRTEQYQSSPHEPSK, and SPRENDYDNSPTALSRISSPN. The Nuclear localization signal signature appears at 368–387; the sequence is RKGAKSRLSSSKSKSRTSPY. The span at 373–385 shows a compositional bias: low complexity; the sequence is SRLSSSKSKSRTS. The segment covering 394–404 has biased composition (basic and acidic residues); the sequence is HTERSESDHDS. The span at 649–662 shows a compositional bias: polar residues; sequence DNSPTALSRISSPN.

As to quaternary structure, efficient DNA binding requires dimerization with another bHLH protein. Heterodimer; forms a heterodimer with ARNT, ARNT2.

The protein localises to the nucleus. In terms of biological role, transcriptional factor that may have pleiotropic effects during embryogenesis and in the adult. This is Single-minded homolog 1 (SIM1) from Pan troglodytes (Chimpanzee).